We begin with the raw amino-acid sequence, 288 residues long: 4-diphosphocytidyl-2-C-methyl-D-erythritol kinase (288 aa).

Residue lysine 13 is part of the active site. Residue proline 97 to serine 107 coordinates ATP. Residue aspartate 139 is part of the active site.

The protein belongs to the GHMP kinase family. IspE subfamily.

It catalyses the reaction 4-CDP-2-C-methyl-D-erythritol + ATP = 4-CDP-2-C-methyl-D-erythritol 2-phosphate + ADP + H(+). Its pathway is isoprenoid biosynthesis; isopentenyl diphosphate biosynthesis via DXP pathway; isopentenyl diphosphate from 1-deoxy-D-xylulose 5-phosphate: step 3/6. Its function is as follows. Catalyzes the phosphorylation of the position 2 hydroxy group of 4-diphosphocytidyl-2C-methyl-D-erythritol. This is 4-diphosphocytidyl-2-C-methyl-D-erythritol kinase from Saccharophagus degradans (strain 2-40 / ATCC 43961 / DSM 17024).